A 381-amino-acid polypeptide reads, in one-letter code: L-lactate dehydrogenase (381 aa).

Positions 1-380 (MIISASTDYR…TRDSLVRELG (380 aa)) constitute an FMN hydroxy acid dehydrogenase domain. Substrate is bound at residue Y24. Positions 106 and 127 each coordinate FMN. Y129 contributes to the substrate binding site. T155 contacts FMN. Residue R164 coordinates substrate. FMN is bound at residue K251. H275 serves as the catalytic Proton acceptor. R278 serves as a coordination point for substrate. FMN is bound at residue 306 to 330 (DSGIRSGLDVVRMIALGADTVLIGR).

This sequence belongs to the FMN-dependent alpha-hydroxy acid dehydrogenase family. In terms of assembly, homotetramer. Requires FMN as cofactor.

Its subcellular location is the cell inner membrane. The enzyme catalyses (S)-lactate + A = pyruvate + AH2. Catalyzes the conversion of L-lactate to pyruvate. Is coupled to the respiratory chain. The sequence is that of L-lactate dehydrogenase from Pseudomonas putida (strain ATCC 700007 / DSM 6899 / JCM 31910 / BCRC 17059 / LMG 24140 / F1).